A 344-amino-acid chain; its full sequence is N-acetyl-gamma-glutamyl-phosphate reductase (344 aa).

Cysteine 147 is a catalytic residue.

Belongs to the NAGSA dehydrogenase family. Type 1 subfamily.

The protein resides in the cytoplasm. The catalysed reaction is N-acetyl-L-glutamate 5-semialdehyde + phosphate + NADP(+) = N-acetyl-L-glutamyl 5-phosphate + NADPH + H(+). It participates in amino-acid biosynthesis; L-arginine biosynthesis; N(2)-acetyl-L-ornithine from L-glutamate: step 3/4. In terms of biological role, catalyzes the NADPH-dependent reduction of N-acetyl-5-glutamyl phosphate to yield N-acetyl-L-glutamate 5-semialdehyde. The sequence is that of N-acetyl-gamma-glutamyl-phosphate reductase from Bacillus amyloliquefaciens (Bacillus velezensis).